The primary structure comprises 100 residues: Urease subunit gamma (100 aa).

This sequence belongs to the urease gamma subunit family. As to quaternary structure, heterotrimer of UreA (gamma), UreB (beta) and UreC (alpha) subunits. Three heterotrimers associate to form the active enzyme.

Its subcellular location is the cytoplasm. It catalyses the reaction urea + 2 H2O + H(+) = hydrogencarbonate + 2 NH4(+). It functions in the pathway nitrogen metabolism; urea degradation; CO(2) and NH(3) from urea (urease route): step 1/1. This chain is Urease subunit gamma, found in Verminephrobacter eiseniae (strain EF01-2).